The sequence spans 81 residues: Defensin-like protein 45 (81 aa).

The signal sequence occupies residues 1–27 (MAITKTSATFVLLIILAASLSNFNVLA). 4 disulfide bridges follow: Cys40–Cys79, Cys44–Cys67, Cys53–Cys77, and Cys57–Cys78.

Belongs to the DEFL family.

The protein localises to the secreted. The polypeptide is Defensin-like protein 45 (Arabidopsis thaliana (Mouse-ear cress)).